The sequence spans 206 residues: Max dimerization protein 3 (206 aa).

Residues isoleucine 8–alanine 25 form an interaction with SIN3A and SIN3B region. Positions serine 57–leucine 109 constitute a bHLH domain.

Efficient DNA binding requires dimerization with another bHLH protein. Binds DNA as a heterodimer with MAX. Interacts with SIN3A AND SIN3B. Interacts with RNF17.

It localises to the nucleus. Functionally, transcriptional repressor. Binds with MAX to form a sequence-specific DNA-binding protein complex which recognizes the core sequence 5'-CAC[GA]TG-3'. Antagonizes MYC transcriptional activity by competing for MAX and suppresses MYC dependent cell transformation. This is Max dimerization protein 3 (Mxd3) from Rattus norvegicus (Rat).